A 103-amino-acid polypeptide reads, in one-letter code: Small ribosomal subunit protein uS10 (103 aa).

It belongs to the universal ribosomal protein uS10 family. Part of the 30S ribosomal subunit.

In terms of biological role, involved in the binding of tRNA to the ribosomes. The polypeptide is Small ribosomal subunit protein uS10 (Alteromonas mediterranea (strain DSM 17117 / CIP 110805 / LMG 28347 / Deep ecotype)).